Reading from the N-terminus, the 302-residue chain is Acetylglutamate kinase (302 aa).

Substrate contacts are provided by residues 55–56, arginine 77, and asparagine 176; that span reads GG.

This sequence belongs to the acetylglutamate kinase family. ArgB subfamily.

It is found in the cytoplasm. The catalysed reaction is N-acetyl-L-glutamate + ATP = N-acetyl-L-glutamyl 5-phosphate + ADP. It functions in the pathway amino-acid biosynthesis; L-arginine biosynthesis; N(2)-acetyl-L-ornithine from L-glutamate: step 2/4. Its function is as follows. Catalyzes the ATP-dependent phosphorylation of N-acetyl-L-glutamate. The polypeptide is Acetylglutamate kinase (Corynebacterium efficiens (strain DSM 44549 / YS-314 / AJ 12310 / JCM 11189 / NBRC 100395)).